A 486-amino-acid chain; its full sequence is uncharacterized protein (486 aa).

The protein belongs to the UbiD family.

This is an uncharacterized protein from Aquifex aeolicus (strain VF5).